The following is a 183-amino-acid chain: Translation initiation factor IF-3 (183 aa).

Belongs to the IF-3 family. In terms of assembly, monomer.

The protein localises to the cytoplasm. IF-3 binds to the 30S ribosomal subunit and shifts the equilibrium between 70S ribosomes and their 50S and 30S subunits in favor of the free subunits, thus enhancing the availability of 30S subunits on which protein synthesis initiation begins. In Pseudomonas putida (strain W619), this protein is Translation initiation factor IF-3.